Reading from the N-terminus, the 150-residue chain is Transcriptional repressor NrdR (150 aa).

Residues Cys3–Cys34 fold into a zinc finger. An ATP-cone domain is found at Leu46–Asp136.

This sequence belongs to the NrdR family. Requires Zn(2+) as cofactor.

In terms of biological role, negatively regulates transcription of bacterial ribonucleotide reductase nrd genes and operons by binding to NrdR-boxes. This Corynebacterium kroppenstedtii (strain DSM 44385 / JCM 11950 / CIP 105744 / CCUG 35717) protein is Transcriptional repressor NrdR.